Consider the following 545-residue polypeptide: DNA-binding protein REPIN1 (545 aa).

A disordered region spans residues methionine 1–lysine 50. Serine 27 bears the Phosphoserine mark. Lysine 39 is modified (N6-acetyllysine). The segment at histidine 52–cysteine 74 adopts a C2H2-type 1; atypical zinc-finger fold. C2H2-type zinc fingers lie at residues leucine 80 to histidine 102 and phenylalanine 111 to histidine 133. Residues isoleucine 140–cysteine 162 form a C2H2-type 4; atypical zinc finger. 11 consecutive C2H2-type zinc fingers follow at residues phenylalanine 172–histidine 194, phenylalanine 229–histidine 251, histidine 257–histidine 279, tyrosine 285–histidine 307, histidine 353–histidine 375, phenylalanine 381–histidine 403, phenylalanine 409–histidine 431, phenylalanine 437–histidine 459, tyrosine 465–histidine 487, tyrosine 493–histidine 515, and phenylalanine 521–histidine 543. An N6-acetyllysine modification is found at lysine 269.

Homodimers and homomultimers. Found in a complex with RIP60 and RIP100.

It is found in the nucleus. Its subcellular location is the cytoplasm. The protein resides in the cytosol. Its function is as follows. Sequence-specific double-stranded DNA-binding protein. Binds ATT-rich and T-rich DNA sequences and facilitates DNA bending. May regulate the expression of genes involved in cellular fatty acid import, including SCARB1/CD36, and genes involved in lipid droplet formation. May regulate the expression of LCN2, and thereby influence iron metabolism and apoptosis-related pathways. May regulate the expression of genes involved in glucose transport. The sequence is that of DNA-binding protein REPIN1 (Repin1) from Mus musculus (Mouse).